The primary structure comprises 135 residues: MRIIQTTGKRKTAIARAVIREGRGRVRINGKPVEIIEPEIARFTILEPLILAGEEIWNSVDIDVKVQGGGFMGQAEAARIAIARALVEWTGDMNLKEKFIKYDRTMLVGDPRRTEPHKPNRSTKGPRAKRQKSYR.

Residues 108–118 (VGDPRRTEPHK) are compositionally biased toward basic and acidic residues. The segment at 108–135 (VGDPRRTEPHKPNRSTKGPRAKRQKSYR) is disordered. Residues 119–135 (PNRSTKGPRAKRQKSYR) show a composition bias toward basic residues.

Belongs to the universal ribosomal protein uS9 family.

The sequence is that of Small ribosomal subunit protein uS9 (rps9) from Pyrococcus horikoshii (strain ATCC 700860 / DSM 12428 / JCM 9974 / NBRC 100139 / OT-3).